Reading from the N-terminus, the 267-residue chain is uncharacterized protein (267 aa).

The ABC transporter domain occupies 17-248 (LKVENLTKIF…PRDRTSIEFL (232 aa)). An ATP-binding site is contributed by 53 to 60 (GPSGCGKT).

The protein belongs to the ABC transporter superfamily.

This is an uncharacterized protein from Methanocaldococcus jannaschii (strain ATCC 43067 / DSM 2661 / JAL-1 / JCM 10045 / NBRC 100440) (Methanococcus jannaschii).